Consider the following 378-residue polypeptide: tRNA-specific 2-thiouridylase MnmA (378 aa).

ATP is bound by residues 27 to 34 and Leu53; that span reads AMSGGVDS. The active-site Nucleophile is the Cys121. A disulfide bond links Cys121 and Cys218. Gly145 provides a ligand contact to ATP. The segment at 168–170 is interaction with tRNA; it reads RDQ. Residue Cys218 is the Cysteine persulfide intermediate of the active site.

The protein belongs to the MnmA/TRMU family.

The protein localises to the cytoplasm. It carries out the reaction S-sulfanyl-L-cysteinyl-[protein] + uridine(34) in tRNA + AH2 + ATP = 2-thiouridine(34) in tRNA + L-cysteinyl-[protein] + A + AMP + diphosphate + H(+). Catalyzes the 2-thiolation of uridine at the wobble position (U34) of tRNA, leading to the formation of s(2)U34. This chain is tRNA-specific 2-thiouridylase MnmA, found in Rhizorhabdus wittichii (strain DSM 6014 / CCUG 31198 / JCM 15750 / NBRC 105917 / EY 4224 / RW1) (Sphingomonas wittichii).